The chain runs to 359 residues: 4-hydroxy-2-oxovalerate aldolase 1 (359 aa).

The 253-residue stretch at 23 to 275 (VRVTDTSLRD…KTGIDFFDIA (253 aa)) folds into the Pyruvate carboxyltransferase domain. 31–32 (RD) is a substrate binding site. A Mn(2+)-binding site is contributed by Asp-32. Catalysis depends on His-35, which acts as the Proton acceptor. Residues Ser-185 and His-214 each contribute to the substrate site. Mn(2+)-binding residues include His-214 and His-216. Tyr-305 lines the substrate pocket.

It belongs to the 4-hydroxy-2-oxovalerate aldolase family.

The catalysed reaction is (S)-4-hydroxy-2-oxopentanoate = acetaldehyde + pyruvate. In Mycobacteroides abscessus (strain ATCC 19977 / DSM 44196 / CCUG 20993 / CIP 104536 / JCM 13569 / NCTC 13031 / TMC 1543 / L948) (Mycobacterium abscessus), this protein is 4-hydroxy-2-oxovalerate aldolase 1.